The primary structure comprises 1295 residues: Phosphoribosylformylglycinamidine synthase (1295 aa).

Residues 302-327 (APFSGAATGSGGEIRDEGATGRGSKP) are disordered. Residues 306 to 317 (GAATGSGGEIRD) and A677 each bind ATP. Residues D678, E717, N721, and D884 each contribute to the Mg(2+) site. S886 contacts ATP. The 254-residue stretch at 1042–1295 (MAILREQGVN…MFRNARVYLG (254 aa)) folds into the Glutamine amidotransferase type-1 domain. Catalysis depends on C1135, which acts as the Nucleophile. Residues H1260 and E1262 contribute to the active site.

The protein in the N-terminal section; belongs to the FGAMS family. In terms of assembly, monomer.

Its subcellular location is the cytoplasm. The enzyme catalyses N(2)-formyl-N(1)-(5-phospho-beta-D-ribosyl)glycinamide + L-glutamine + ATP + H2O = 2-formamido-N(1)-(5-O-phospho-beta-D-ribosyl)acetamidine + L-glutamate + ADP + phosphate + H(+). The protein operates within purine metabolism; IMP biosynthesis via de novo pathway; 5-amino-1-(5-phospho-D-ribosyl)imidazole from N(2)-formyl-N(1)-(5-phospho-D-ribosyl)glycinamide: step 1/2. Its function is as follows. Phosphoribosylformylglycinamidine synthase involved in the purines biosynthetic pathway. Catalyzes the ATP-dependent conversion of formylglycinamide ribonucleotide (FGAR) and glutamine to yield formylglycinamidine ribonucleotide (FGAM) and glutamate. The chain is Phosphoribosylformylglycinamidine synthase from Pseudoalteromonas atlantica (strain T6c / ATCC BAA-1087).